Here is a 420-residue protein sequence, read N- to C-terminus: MVEKRTQPLARDAMAYVLAGGRGSRLKELTDRRAKPAVYFGGKARIIDFALSNALNSGIRRIGVATQYKAHSLIRHLQRGWNFFRPERNESFDILPASQRVSETQWYEGTADAVFQNIDIIEDHGVEYMVILAGDHIYKMDYELMLQQHVDSGADVTIGCLEVPRMEATGFGVMHVDNEDRIIAFVEKPADPPGIPGNPEMALASMGIYVFHTKFLMDMLRRDAADPKSSRDFGKDIIPYIVEHGKAVAHRFTHSCVRSDFEREAYWRDVGTIDAYWQANIDLTHITPELDIYDSTWPIWTFSEIKPPAKFVHDDEDRRGSATSSLVSGDCIISGAALNKSLLFTGVRVNSYSRLENAVVLPDVTIGRHSILRNVVIDSRVVIPEGLVVGDDPELDAKRFRRSENGVCLITQTMIDKLGM.

Residues Tyr-107, Gly-172, 187–188, and Ser-205 contribute to the alpha-D-glucose 1-phosphate site; that span reads EK.

It belongs to the bacterial/plant glucose-1-phosphate adenylyltransferase family. In terms of assembly, homotetramer.

The catalysed reaction is alpha-D-glucose 1-phosphate + ATP + H(+) = ADP-alpha-D-glucose + diphosphate. The protein operates within glycan biosynthesis; glycogen biosynthesis. Functionally, involved in the biosynthesis of ADP-glucose, a building block required for the elongation reactions to produce glycogen. Catalyzes the reaction between ATP and alpha-D-glucose 1-phosphate (G1P) to produce pyrophosphate and ADP-Glc. This chain is Glucose-1-phosphate adenylyltransferase, found in Sinorhizobium fredii (strain NBRC 101917 / NGR234).